The chain runs to 273 residues: Dermonecrotic toxin LsaSicTox-alphaIB1ai (273 aa).

The active site involves histidine 5. Glutamate 25 and aspartate 27 together coordinate Mg(2+). Histidine 41 functions as the Nucleophile in the catalytic mechanism. 2 disulfides stabilise this stretch: cysteine 45-cysteine 51 and cysteine 47-cysteine 190. Position 85 (aspartate 85) interacts with Mg(2+).

This sequence belongs to the arthropod phospholipase D family. Class II subfamily. It depends on Mg(2+) as a cofactor. In terms of tissue distribution, expressed by the venom gland.

The protein resides in the secreted. It catalyses the reaction an N-(acyl)-sphingosylphosphocholine = an N-(acyl)-sphingosyl-1,3-cyclic phosphate + choline. It carries out the reaction an N-(acyl)-sphingosylphosphoethanolamine = an N-(acyl)-sphingosyl-1,3-cyclic phosphate + ethanolamine. The enzyme catalyses a 1-acyl-sn-glycero-3-phosphocholine = a 1-acyl-sn-glycero-2,3-cyclic phosphate + choline. The catalysed reaction is a 1-acyl-sn-glycero-3-phosphoethanolamine = a 1-acyl-sn-glycero-2,3-cyclic phosphate + ethanolamine. Its function is as follows. Dermonecrotic toxins cleave the phosphodiester linkage between the phosphate and headgroup of certain phospholipids (sphingolipid and lysolipid substrates), forming an alcohol (often choline) and a cyclic phosphate. This toxin acts on sphingomyelin (SM). It may also act on ceramide phosphoethanolamine (CPE), lysophosphatidylcholine (LPC) and lysophosphatidylethanolamine (LPE), but not on lysophosphatidylserine (LPS), and lysophosphatidylglycerol (LPG). It acts by transphosphatidylation, releasing exclusively cyclic phosphate products as second products. Induces dermonecrosis, hemolysis, increased vascular permeability, edema, inflammatory response, and platelet aggregation. This is Dermonecrotic toxin LsaSicTox-alphaIB1ai from Loxosceles sabina (Tucson recluse spider).